The following is a 182-amino-acid chain: Lipoprotein signal peptidase (182 aa).

4 consecutive transmembrane segments (helical) span residues 15-35 (IYLG…FLVI), 44-64 (LEVF…FVFG), 65-85 (AFQD…VFLI), and 97-117 (PWGW…KFFV). Residues Asp-140 and Asp-162 contribute to the active site. Residues 155–175 (WPAFNVADSCVTIGLTILIFT) form a helical membrane-spanning segment.

This sequence belongs to the peptidase A8 family.

Its subcellular location is the cell inner membrane. The enzyme catalyses Release of signal peptides from bacterial membrane prolipoproteins. Hydrolyzes -Xaa-Yaa-Zaa-|-(S,diacylglyceryl)Cys-, in which Xaa is hydrophobic (preferably Leu), and Yaa (Ala or Ser) and Zaa (Gly or Ala) have small, neutral side chains.. It participates in protein modification; lipoprotein biosynthesis (signal peptide cleavage). Functionally, this protein specifically catalyzes the removal of signal peptides from prolipoproteins. The polypeptide is Lipoprotein signal peptidase (Leptospira interrogans serogroup Icterohaemorrhagiae serovar Lai (strain 56601)).